Here is a 188-residue protein sequence, read N- to C-terminus: MSIKSDKWIRRMSEEFGMIDPFEPNQIKEADGKRIISYGTSSYGYDIRCANEFKIFTNINSTIVDPKNFDPKNFVTVEDDCCIIPPNSFALARTVEYFRIPRNVLTVCLGKSTYARCGIIVNVTPFEPEWEGYVTLEFSNTTPLPAKIYAGEGVAQVLFFESDEICKTSYKDRNGKYMGQTGVTLPKA.

DCTP-binding positions include 111 to 116 (KSTYAR), 135 to 137 (TLE), Gln156, Tyr170, and Gln180. Glu137 acts as the Proton donor/acceptor in catalysis.

This sequence belongs to the dCTP deaminase family. As to quaternary structure, homotrimer.

It catalyses the reaction dCTP + H2O + H(+) = dUTP + NH4(+). Its pathway is pyrimidine metabolism; dUMP biosynthesis; dUMP from dCTP (dUTP route): step 1/2. Its function is as follows. Catalyzes the deamination of dCTP to dUTP. The polypeptide is dCTP deaminase (Neisseria meningitidis serogroup C / serotype 2a (strain ATCC 700532 / DSM 15464 / FAM18)).